The primary structure comprises 286 residues: ATP synthase gamma chain (286 aa).

This sequence belongs to the ATPase gamma chain family. In terms of assembly, F-type ATPases have 2 components, CF(1) - the catalytic core - and CF(0) - the membrane proton channel. CF(1) has five subunits: alpha(3), beta(3), gamma(1), delta(1), epsilon(1). CF(0) has three main subunits: a, b and c.

It is found in the cell membrane. Produces ATP from ADP in the presence of a proton gradient across the membrane. The gamma chain is believed to be important in regulating ATPase activity and the flow of protons through the CF(0) complex. This is ATP synthase gamma chain from Oceanobacillus iheyensis (strain DSM 14371 / CIP 107618 / JCM 11309 / KCTC 3954 / HTE831).